The sequence spans 359 residues: 4-galactosyl-N-acetylglucosaminide 3-alpha-L-fucosyltransferase FUT6 (359 aa).

At 1-14 (MDPLGPAKPQWSWR) the chain is on the cytoplasmic side. A helical; Signal-anchor for type II membrane protein transmembrane segment spans residues 15–34 (CCLTTLLFQLLMAVCFFSYL). Residues 35 to 359 (RVSQDDPTVY…QTRGIAAWFT (325 aa)) are Lumenal-facing. Residues asparagine 46, asparagine 91, asparagine 153, and asparagine 184 are each glycosylated (N-linked (GlcNAc...) asparagine). The segment at 73 to 112 (KPIALPRCSEMVPGTADCNITADRKVYPQADAVIVHHREV) is determines site-specific fucosylation.

Belongs to the glycosyltransferase 10 family. In terms of assembly, homodimer and monomer. Monomer (secreted form). In terms of processing, N-glycosylated. Post-translationally, proteolytic cleavage releases a secreted glycoform of 43 kDa. Kidney, liver, colon, small intestine, bladder, uterus and salivary gland.

The protein resides in the golgi apparatus. The protein localises to the golgi stack membrane. It localises to the secreted. The catalysed reaction is a beta-D-galactosyl-(1-&gt;4)-N-acetyl-beta-D-glucosaminyl derivative + GDP-beta-L-fucose = a beta-D-galactosyl-(1-&gt;4)-[alpha-L-fucosyl-(1-&gt;3)]-N-acetyl-beta-D-glucosaminyl derivative + GDP + H(+). It carries out the reaction an N-acetyl-alpha-neuraminyl-(2-&gt;3)-beta-D-galactosyl-(1-&gt;4)-N-acetyl-beta-D-glucosaminyl derivative + GDP-beta-L-fucose = an alpha-Neu5Ac-(2-&gt;3)-beta-D-Gal-(1-&gt;4)-[alpha-L-Fuc-(1-&gt;3)]-beta-D-GlcNAc derivative + GDP + H(+). The enzyme catalyses an alpha-Neu5Ac-(2-&gt;3)-beta-D-Gal-(1-&gt;4)-beta-D-GlcNAc-(1-&gt;3)-beta-D-Gal-(1-&gt;4)-[alpha-L-Fuc-(1-&gt;3)]-beta-D-GlcNAc derivative + GDP-beta-L-fucose = an alpha-Neu5Ac-(2-&gt;3)-beta-D-Gal-(1-&gt;4)-[alpha-L-Fuc-(1-&gt;3)]-beta-D-GlcNAc-(1-&gt;3)-beta-D-Gal-(1-&gt;4)-[alpha-L-Fuc-(1-&gt;3)]-beta-D-GlcNAc derivative + GDP + H(+). It catalyses the reaction a neolactoside nLc6Cer + GDP-beta-L-fucose = beta-D-Gal-(1-&gt;4)-[alpha-L-Fuc-(1-&gt;3)]-beta-D-GlcNAc-(1-&gt;3)-beta-D-Gal-(1-&gt;4)-beta-D-GlcNAc-(1-&gt;3)-beta-D-Gal-(1-&gt;4)-beta-D-Glc-(1&lt;-&gt;1')-Cer + GDP + H(+). The catalysed reaction is a neolactoside nLc6Cer + GDP-beta-L-fucose = beta-D-galactosyl-(1-&gt;4)-N-acetyl-beta-D-glucosaminyl-(1-&gt;3)-beta-D-galactosyl-(1-&gt;4)-[alpha-L-fucosyl-(1-&gt;3)]-N-acetyl-beta-D-glucosaminyl-(1-&gt;3)-beta-D-galactosyl-(1-&gt;4)-beta-D-glucosyl-(1&lt;-&gt;1')-ceramide + GDP + H(+). It carries out the reaction a neolactoside VI(3)-alpha-NeuNAc-nLc6Cer + GDP-beta-L-fucose = a neolactoside VI(3)-alpha-NeuAc,V(3)-alphaFuc-nLc6Cer + GDP + H(+). The enzyme catalyses beta-D-galactosyl-(1-&gt;4)-N-acetyl-D-glucosamine + GDP-beta-L-fucose = beta-D-galactosyl-(1-&gt;4)-[alpha-L-fucosyl-(1-&gt;3)]-N-acetyl-D-glucosamine + GDP + H(+). It catalyses the reaction N-acetyl-alpha-neuraminosyl-(2-&gt;3)-beta-D-galactosyl-(1-&gt;4)-N-acetyl-beta-D-glucosamine + GDP-beta-L-fucose = N-acetyl-alpha-neuraminosyl-(2-&gt;3)-beta-D-galactosyl-(1-&gt;4)-[alpha-L-fucosyl-(1-&gt;3)]-N-acetyl-beta-D-glucosamine + GDP + H(+). The catalysed reaction is lactose + GDP-beta-L-fucose = beta-D-galactosyl-(1-&gt;4)-[alpha-L-fucosyl-(1-&gt;3)]-D-glucose + GDP + H(+). It carries out the reaction alpha-L-Fuc-(1-&gt;2)-beta-D-Gal-(1-&gt;4)-D-Glc + GDP-beta-L-fucose = alpha-L-Fuc-(1-&gt;2)-beta-D-Gal-(1-&gt;4)-[alpha-L-Fuc-(1-&gt;3)]-D-Glc + GDP + H(+). The enzyme catalyses a beta-D-galactosyl-(1-&gt;4)-N-acetyl-beta-D-6-sulfooxy-glucosaminyl derivative + GDP-beta-L-fucose = a beta-D-galactosyl-(1-&gt;4)-[alpha-L-fucosyl-(1-&gt;3)]-N-acetyl-beta-D-6-sulfooxy-glucosaminyl derivative + GDP + H(+). It functions in the pathway protein modification; protein glycosylation. Catalyzes the transfer of L-fucose, from a guanosine diphosphate-beta-L-fucose, to the N-acetyl glucosamine (GlcNAc) of a distal alpha2,3 sialylated lactosamine unit of a glycoprotein- or a glycolipid-linked sialopolylactosamines chain or of a distal or internal lactosamine unit of a neutral glycoprotein- or a glycolipid-linked polylactosamines chain through an alpha-1,3 glycosidic linkage and participates in surface expression of the sialyl Lewis X (sLe(x)), Lewis X (Le(x)) and non sialylated VIM2 determinants. Moreover transfers fucose to H-type 2 (Fucalpha1-2Galbeta1-4GlcNAc) chain acceptor substrates and participates in difucosylated sialyl Lewis x determinants. Also fucosylates a polylactosamine substrate having a 6 sulfate modification at the GlcNAc moiety and gives rise to sialyl and non-sialyl 6-sulfo lewis X. Does not have activity towards type 1 ((Galbeta1-3GlcNAc)) and H-type 1 chain (Fucalpha1-2Galbeta1-3GlcNAc) acceptors substrates. Its function is as follows. Does not have alpha(1,3)-fucosyltransferase activity. The sequence is that of 4-galactosyl-N-acetylglucosaminide 3-alpha-L-fucosyltransferase FUT6 from Homo sapiens (Human).